The primary structure comprises 387 residues: MSHRKYEAPRHGHLGFLPRKRAASVRGRVKSFPKDDKSKPVALTSFLGYKAGMTTIVRDLDRPGSKFHKREIVEAVTVVDTPPVVVVGVVGYVETPRGLRSLTTVWAEHLSDEVKRRFYKNWYKSKKKAFTKYSAKYAQNGAEIERELARIKKYATVVRVLVHTQVRKTPLVQKKAHLAEIQLNGGSISEKVDWAREHFEKTVSVDSVFEQNEMIDAIAVTKGHGFEGVTHRWGTKKLPRKTHRGLRKVACIGAWHPAHVMWSVARAGQRGYHHRTSINHKIYRIGKGDDEGNAATNFDRTKKTINPMGGFVHYGMVNNDFVMVKGSIPGCKKRVVTLRKSLYTNTSRKAVEEVTLKWIDTASKFGKGRFQTPAEKHAFMGTLKKDL.

Belongs to the universal ribosomal protein uL3 family.

It is found in the cytoplasm. This is Large ribosomal subunit protein uL3 (RPL3) from Candida glabrata (strain ATCC 2001 / BCRC 20586 / JCM 3761 / NBRC 0622 / NRRL Y-65 / CBS 138) (Yeast).